A 577-amino-acid chain; its full sequence is MEGETLPLAQYLFKRLLQLGVDSIFGVPGDYNLTLLDHVVPSGLKWVGNCNELNAGYAADGYSRIKDIGAVVTTFGVGELSAINAIAGAYAEKAPVVHIVGTPMRASQESRALIHHTFNDGDYQRFDAIQEHVTVAQVSLSDHRTAPSEIDRILLQCLLHSRPVRIAIPVDMVPVLVPVAGLSSKIQIPPAVRQPQAEEAALNAVLKRIYSSKKPMILVDGETRSFGMLQRVNHFIQTIGWPTFTSGFGKGLVDETLPNVYGVCTLHQKAFVDSCDLVLVFGPHFSNTNSYNYFLKPADEKSVLFSPNSIQVNKDVFRDLPVGYFIEQLTQQLDISRIPTHKHDLVHPSLRTLPEVSPTDLVTQTGGFWKRFSPFLRTGDIILGETGTPGYGVNDFILPPQTRLFKPATWLSIGYMLPAALGASHAQRDLVASDQYHSLSNPRTILFIGDGSFQMTVQELSTIIHQKLNVIIFLINNDGYTIERCIHGRNQAYNDVAPWRYLKAAEFFGADQDGEYKASTWEVRTWADLDRVLNDSQLADGKGLRMVEVFMERLDAPDVLMGLLNNQVLRENAQSRL.

Residues aspartate 30 and histidine 116 each contribute to the substrate site. Residues 388-482 (TPGYGVNDFI…FLINNDGYTI (95 aa)) form a thiamine pyrophosphate binding region. Positions 450, 477, and 479 each coordinate Mg(2+). A substrate-binding site is contributed by glutamate 483.

Belongs to the TPP enzyme family. As to quaternary structure, homotetramer. A metal cation is required as a cofactor. Requires thiamine diphosphate as cofactor.

The enzyme catalyses a 2-oxocarboxylate + H(+) = an aldehyde + CO2. The protein is Pyruvate decarboxylase (pdcA) of Aspergillus parasiticus.